Here is a 743-residue protein sequence, read N- to C-terminus: Phenylalanine ammonia-lyase 1 (743 aa).

Y120 (proton donor/acceptor) is an active-site residue. Positions 224-226 (ASG) form a cross-link, 5-imidazolinone (Ala-Gly). S225 bears the 2,3-didehydroalanine (Ser) mark. Residues N287, Q377, R383, N413, K484, E512, and N515 each contribute to the (E)-cinnamate site.

Belongs to the PAL/histidase family. As to quaternary structure, homotetramer. In terms of processing, contains an active site 4-methylidene-imidazol-5-one (MIO), which is formed autocatalytically by cyclization and dehydration of residues Ala-Ser-Gly.

Its subcellular location is the cytoplasm. It catalyses the reaction L-phenylalanine = (E)-cinnamate + NH4(+). The protein operates within phenylpropanoid metabolism; trans-cinnamate biosynthesis; trans-cinnamate from L-phenylalanine: step 1/1. Functionally, catalyzes the non-oxidative deamination of L-phenylalanine to form trans-cinnamic acid and a free ammonium ion. Facilitates the commitment step in phenylpropanoid pathways that produce secondary metabolites such as lignins, coumarins and flavonoids. The chain is Phenylalanine ammonia-lyase 1 from Pleurotus ostreatus (Oyster mushroom).